Here is a 662-residue protein sequence, read N- to C-terminus: Neurexin-2-beta (662 aa).

Gly residues predominate over residues 1–10 (MPPGGSGQGG). The tract at residues 1–27 (MPPGGSGQGGCPRRPPALAGPLPPPPP) is disordered. The signal sequence occupies residues 1–46 (MPPGGSGQGGCPRRPPALAGPLPPPPPPPPLPLLLGLLLLLGAAEG). Over 47–586 (ARVSSSLSTT…EVIRESSSTT (540 aa)) the chain is Extracellular. Residues 87–295 (TTYIFGKGGA…HLRLVGEGPS (209 aa)) form the Laminin G-like domain. Residues D139 and V156 each coordinate Ca(2+). The N-linked (GlcNAc...) asparagine glycan is linked to N186. Ca(2+)-binding residues include I238 and N240. S350 carries O-linked (Xyl...) (heparan sulfate) serine glycosylation. Disordered regions lie at residues 408-458 (ATQD…LPPT), 476-496 (LLSPRKPAPRPNLRTDGATGA), and 530-557 (LGPGVPTAFEPRRPPPLRPGVTSVPGFP). The chain crosses the membrane as a helical span at residues 587–607 (GMVVGIVAAAALCILILLYAM). Residues 608–662 (YKYRNRDEGSYQVDQSRNYISNSAQSNGAVVKEKAPAAPKTPSKAKKNKDKEYYV) lie on the Cytoplasmic side of the membrane. Residues 629-662 (NSAQSNGAVVKEKAPAAPKTPSKAKKNKDKEYYV) form a disordered region.

Belongs to the neurexin family. In terms of assembly, interacts (via cytoplasmic C-terminal region) with CASK. Isoform Beta 4b binds alpha-dystroglycan and neuroligins NLGN1, NLGN2 and NLGN3. Interacts with CBLN1, CBLN2 and, less avidly, with CBLN4. Interacts with CLSTN3. Post-translationally, O-glycosylated; contains heparan sulfate. Heparan sulfate attachment is required for synapse development by mediating interactions with neuroligins. As to expression, brain (neuronal synapse).

It localises to the presynaptic cell membrane. Neuronal cell surface protein that may be involved in cell recognition and cell adhesion. The protein is Neurexin-2-beta (Nrxn2) of Rattus norvegicus (Rat).